The sequence spans 836 residues: MSKLSFRARALDASKPLPVFRCEDLPDLHEYASINRAVPQMPTGMEKEEESEHHLQRAISAQQVYGEKRDNMVIPVPEAESNIAYYESIYPGEFKMPKQLIHIQPFSLDAEQPDYDLDSEDEVFVNKLKKKMDICPLQFEEMIDRLEKGSGQQPVSLQEAKLLLKEDDELIREVYEYWIKKRKNCRGPSLIPSVKQEKRDGSSTNDPYVAFRRRTEKMQTRKNRKNDEASYEKMLKLRRDLSRAVTILEMIKRREKSKRELLHLTLEIMEKRYNLGDYNGEIMSEVMAQRQPMKPTYAIPIIPITNSSQFKHQEAMDVKEFKVNKQDKADLIRPKRKYEKKPKVLPSSAAATPQQTSPAALPVFNAKDLNQYDFPSSDEEPLSQVLSGSSEAEEDNDPDGPFAFRRKAGCQYYAPHLDQTGNWPWTSPKDGGLGDVRYRYCLTTLTVPQRCIGFARRRVGRGGRVLLDRAHSDYDSVFHHLDLEMLSSPQHSPVNQFANTSETNTSDKSFSKDLSQILVNIKSCRWRHFRPRTPSLHDSDNDELSCRKLYRSINRTGTAQPGTQTCSTSTQSKSSSGSAHFAFTAEQYQQHQQQLALMQKQQLAQIQQQQANSNSSTNTSQNLASNQQKSGFRLNIQGLERTLQGFVSKTLDSASAQFAASALVTSEQLMGFKMKDDVVLGIGVNGVLPASGVYKGLHLSSTTPTALVHTSPSTAGSALLQPSNITQTSSSHSALSHQVTAANSATTQVLIGNNIRLTVPSSVATVNSIAPINARHIPRTLSAVPSSALKLAAAANCQVSKVPSSSSVDSVPRENHESEKPALNNIADNTVAMEVT.

K319 participates in a covalent cross-link: Glycyl lysine isopeptide (Lys-Gly) (interchain with G-Cter in SUMO2). 2 disordered regions span residues 335-360 (KRKY…SPAA) and 372-401 (YDFP…PDGP). Positions 346–360 (PSSAAATPQQTSPAA) are enriched in low complexity. Phosphoserine is present on S539. K673 is covalently cross-linked (Glycyl lysine isopeptide (Lys-Gly) (interchain with G-Cter in SUMO2)). A disordered region spans residues 802-829 (VPSSSSVDSVPRENHESEKPALNNIADN). The span at 811 to 820 (VPRENHESEK) shows a compositional bias: basic and acidic residues.

Belongs to the enhancer of polycomb family. Component of the NuA4 histone acetyltransferase complex which contains the catalytic subunit KAT5/TIP60 and the subunits EP400, TRRAP/PAF400, BRD8/SMAP, EPC1, DMAP1/DNMAP1, RUVBL1/TIP49, RUVBL2, ING3, actin, ACTL6A/BAF53A, MORF4L1/MRG15, MORF4L2/MRGX, MRGBP, YEATS4/GAS41, VPS72/YL1 and MEAF6. KAT5/TIP60, EPC1, and ING3 together constitute a minimal HAT complex termed Piccolo NuA4. Component of a NuA4-related complex which contains EP400, TRRAP/PAF400, SRCAP, BRD8/SMAP, EPC1, DMAP1/DNMAP1, RUVBL1/TIP49, RUVBL2, actin, ACTL6A/BAF53A, VPS72 and YEATS4/GAS41. Interacts with TRIM27. Interacts with MBTD1; interaction is direct and promotes recruitment of MBTD1 into the NuA4 histone acetyltransferase complex.

It localises to the nucleus. The protein resides in the cytoplasm. In terms of biological role, component of the NuA4 histone acetyltransferase (HAT) complex, a multiprotein complex involved in transcriptional activation of select genes principally by acetylation of nucleosomal histones H4 and H2A. The NuA4 complex plays a direct role in repair of DNA double-strand breaks (DSBs) by promoting homologous recombination (HR). The NuA4 complex is also required for spermatid development by promoting acetylation of histones: histone acetylation is required for histone replacement during the transition from round to elongating spermatids. In the NuA4 complex, EPC1 is required to recruit MBTD1 into the complex. The polypeptide is Enhancer of polycomb homolog 1 (Homo sapiens (Human)).